A 738-amino-acid polypeptide reads, in one-letter code: Alanine--tRNA ligase (738 aa).

Zn(2+) contacts are provided by H564, H568, C666, and H670.

The protein belongs to the class-II aminoacyl-tRNA synthetase family. Homotetramer. Zn(2+) is required as a cofactor.

The protein resides in the cytoplasm. It catalyses the reaction tRNA(Ala) + L-alanine + ATP = L-alanyl-tRNA(Ala) + AMP + diphosphate. In terms of biological role, catalyzes the attachment of alanine to tRNA(Ala) in a two-step reaction: alanine is first activated by ATP to form Ala-AMP and then transferred to the acceptor end of tRNA(Ala). Also edits incorrectly charged Ser-tRNA(Ala) and Gly-tRNA(Ala) via its editing domain. This is Alanine--tRNA ligase (alaS) from Yersinia pestis bv. Antiqua (strain Antiqua).